Consider the following 245-residue polypeptide: tRNA pseudouridine synthase A (245 aa).

Asp52 (nucleophile) is an active-site residue. Tyr110 lines the substrate pocket.

It belongs to the tRNA pseudouridine synthase TruA family. As to quaternary structure, homodimer.

The enzyme catalyses uridine(38/39/40) in tRNA = pseudouridine(38/39/40) in tRNA. Formation of pseudouridine at positions 38, 39 and 40 in the anticodon stem and loop of transfer RNAs. The sequence is that of tRNA pseudouridine synthase A from Borrelia duttonii (strain Ly).